The primary structure comprises 1593 residues: MGFCGDEPFTVWHNDSGDFSKCFEDSVVMTLPAIYLLIFGMKRLYYLENKKPDLFTLKQLSQDFQTWRKTLQLEVIVSILLVAWKILFFIVIVSIYNKPFEILYSVVTVVQWTVSLGLVYLEMKKGQSRSWEIRLYWVFAFFVATVKLRTLTLAIAGKSIYNVGFLEYFSYFVGYCLILILSITSVLFFDNLESYQNLEENEISKEVNANLFSRLTFWWINSVLVKGHKKALEISDVPTLGEIDQSILLSEKFEKAWEEQLKKPNPSLPWALAKAFGPHFYIAALFKIIQDLLIFVGPTLLKRVLGFVESRDGSQDTYDGLIYALLYFLAPVVQSLLLHQYFHRCYRVGMWLRSAVVTAVYKKALKTSLREGTTIGEIVNLMSVDAQKFMDLCPYLHMIWSAPLQLAISLVLLYRILNASVFAGLGIMLVMIPINLAISNLAKKRQTISMKLKDRRTKAVNEVLNGIKVIKLYSWEQSFMDHVNEIRNKELDVMKAIKYIQGFSLLLWSMSPVFVSVSTFTVYILTGQVLSATQAFPALSLFNVMQFPINMLPSVVSSIIEASVSVARLQKFLLKKDLDPNVVEHHINEPGIAVKIDNATLEWEPNKPILHDINLTIKKGELVAIVGQVGSGKSSIVSSLVGDLDKTKGTVAVNGSVALVSQQAWIQNATLKNNILFAKELNQDKYQSVVQACCLEPDIKILPGGDQTEIGEKGINLSGGQKQRVSIARAVYNNADIYIFDDPLSAVDAHVGKAIFKNVLSNQDGILCNKTRILVTHAVHYLPYVDRIILMKDGRIVEEGDFNTLIEAGSHFTELMSHDEQQQQLQQQQAPDKSSDSNEQIGGGDNKESENNEEQNEEEEGENENLLEKVLRKSRSRSPSPSSNRNIDGDDIASGSILQTTRTPEEDEQDERELMEDIDIDGGENIQTPLQKGEKSSVLKQPLRLLKKLPTSINKKLNNSGSGVSLKPITTVNAKPQDKNKIISVETKQEGKVSFKIYLSYFKAIGVLLATCIIGFYVLTQLLSILANWWISIWTNSYGGNGNGSGSGSISLSSSSTVEDNEKAKYYLSIYVAFSCGTIAATFLRSFSMVFGSIKGSKLFHEKMFKAVILSPMSFFDTTPIGRILNRFSKDQLTIDESIARTLGMFLNTFCQVVGSIIVIAWVSPFIILAMVPVGALFYFIQKYYLNSSRELTRLEGVSRSPIYAHFSETLAGVTTIRAFKDVARFVTENERLLDENQKCYYINISSNRWLAIRLEFLGACLVSCAVLYTVLARSRIEAGTAGLVITYALAITGNMNWMVRMSCDLENSVVSIERIQEYCLLPSEAPLFNDKSVPMSWPSHGKIVFKNLWLTYREGLDPVLRGINCTIEPKTKVGIVGRTGAGKSSLTQALFRLVEPLRGTIEIDGIDITELGLNPLRSRMAIIPQDPVLFAGSVRYNLDPFDQYDDHEIWEAIENAHLLKAIKDLDGGLDAMVQDGGDNFSVGQRQLLVIGRALLKKANIIVLDEASSSIDIASDALIQETIRTKFADCTVLTIAHRLGTIADSDKIMVLDKGELIEYDSPSELLKNQDSIYYSLVKASESKQNIDNDDESN.

10 helical membrane-spanning segments follow: residues 27-47 (VVMT…LYYL), 75-95 (VIVS…IVSI), 100-120 (FEIL…GLVY), 135-155 (LYWV…TLAI), 169-189 (FSYF…VLFF), 280-300 (FYIA…GPTL), 318-338 (YDGL…SLLL), 392-412 (LCPY…SLVL), 419-439 (ASVF…LAIS), and 505-525 (LLLW…VYIL). The ABC transmembrane type-1 1 domain occupies 280-561 (FYIAALFKII…LPSVVSSIIE (282 aa)). The ABC transporter 1 domain occupies 594–818 (VKIDNATLEW…GSHFTELMSH (225 aa)). 627-634 (GQVGSGKS) contacts ATP. The segment at 816–938 (MSHDEQQQQL…PLQKGEKSSV (123 aa)) is disordered. Residues 844 to 875 (GDNKESENNEEQNEEEEGENENLLEKVLRKSR) adopt a coiled-coil conformation. Positions 851 to 865 (NNEEQNEEEEGENEN) are enriched in acidic residues. A compositionally biased stretch (low complexity) spans 877-886 (RSPSPSSNRN). A compositionally biased stretch (acidic residues) spans 905–922 (EEDEQDERELMEDIDIDG). 5 consecutive transmembrane segments (helical) span residues 1005–1025 (IGVL…LLSI), 1064–1084 (AKYY…ATFL), 1157–1177 (IIVI…VGAL), 1251–1271 (LAIR…LYTV), and 1280–1300 (GTAG…NWMV). The ABC transmembrane type-1 2 domain maps to 1010 to 1308 (ATCIIGFYVL…MVRMSCDLEN (299 aa)). Positions 1344–1578 (IVFKNLWLTY…QDSIYYSLVK (235 aa)) constitute an ABC transporter 2 domain. An ATP-binding site is contributed by 1378–1385 (GRTGAGKS).

It belongs to the ABC transporter superfamily. ABCC family. Conjugate transporter (TC 3.A.1.208) subfamily.

The protein resides in the membrane. The chain is ABC transporter C family member 8 (abcC8) from Dictyostelium discoideum (Social amoeba).